Here is a 433-residue protein sequence, read N- to C-terminus: Aspartate--tRNA(Asp/Asn) ligase (433 aa).

Position 167 (glutamate 167) interacts with L-aspartate. Residues 189-192 (QLFK) form an aspartate region. Arginine 211 lines the L-aspartate pocket. ATP-binding positions include 211–213 (RAE), 219–221 (RHL), and glutamate 356. Residues glutamate 356 and serine 359 each coordinate Mg(2+). L-aspartate is bound by residues serine 359 and arginine 363. 404–407 (GGER) contributes to the ATP binding site.

This sequence belongs to the class-II aminoacyl-tRNA synthetase family. Type 2 subfamily. As to quaternary structure, homodimer. Requires Mg(2+) as cofactor.

It is found in the cytoplasm. The catalysed reaction is tRNA(Asx) + L-aspartate + ATP = L-aspartyl-tRNA(Asx) + AMP + diphosphate. Its function is as follows. Aspartyl-tRNA synthetase with relaxed tRNA specificity since it is able to aspartylate not only its cognate tRNA(Asp) but also tRNA(Asn). Reaction proceeds in two steps: L-aspartate is first activated by ATP to form Asp-AMP and then transferred to the acceptor end of tRNA(Asp/Asn). The protein is Aspartate--tRNA(Asp/Asn) ligase of Natronomonas pharaonis (strain ATCC 35678 / DSM 2160 / CIP 103997 / JCM 8858 / NBRC 14720 / NCIMB 2260 / Gabara) (Halobacterium pharaonis).